The sequence spans 499 residues: Long chain base biosynthesis protein 2b (499 aa).

Residues 5–25 (VPYVTAATTLFSFGLIFGFGH) form a helical membrane-spanning segment. Position 322 is an N6-(pyridoxal phosphate)lysine (Lys-322).

This sequence belongs to the class-II pyridoxal-phosphate-dependent aminotransferase family. Heterodimer with LCB1. Component of the serine palmitoyltransferase (SPT) complex, composed of LCB1 and LCB2. Pyridoxal 5'-phosphate is required as a cofactor.

Its subcellular location is the endoplasmic reticulum membrane. The catalysed reaction is L-serine + hexadecanoyl-CoA + H(+) = 3-oxosphinganine + CO2 + CoA. The protein operates within lipid metabolism; sphingolipid metabolism. Serine palmitoyltransferase (SPT). The heterodimer formed with LCB1 constitutes the catalytic core. The protein is Long chain base biosynthesis protein 2b of Oryza sativa subsp. japonica (Rice).